The following is a 454-amino-acid chain: Carbamoyl phosphate synthase arginine-specific small chain (454 aa).

The N-terminal 29 residues, 1–29, are a transit peptide targeting the mitochondrion; the sequence is MMFSRFFKAVPARAPAFSSPLPVYQARTM. A Glutamine amidotransferase type-1 domain is found at 219–406; that stretch reads HVAVLDCGVK…IDSVKKYKNS (188 aa). Cys-295 serves as the catalytic Nucleophile. Catalysis depends on residues His-379 and Glu-381.

Belongs to the CarA family. Heterodimer composed of 2 chains; the small (or glutamine) chain promotes the hydrolysis of glutamine to ammonia, which is used by the large (or ammonia) chain to synthesize carbamoyl phosphate.

It is found in the mitochondrion matrix. The catalysed reaction is hydrogencarbonate + L-glutamine + 2 ATP + H2O = carbamoyl phosphate + L-glutamate + 2 ADP + phosphate + 2 H(+). The enzyme catalyses L-glutamine + H2O = L-glutamate + NH4(+). The protein operates within amino-acid biosynthesis; L-arginine biosynthesis; carbamoyl phosphate from bicarbonate: step 1/1. Functionally, small subunit of the arginine-specific carbamoyl phosphate synthase (CPSase). CPSase catalyzes the formation of carbamoyl phosphate from the ammonia moiety of glutamine, carbonate, and phosphate donated by ATP, the first step of the arginine biosynthetic pathway. The small subunit (glutamine amidotransferase) binds and cleaves glutamine to supply the large subunit with the substrate ammonia. The polypeptide is Carbamoyl phosphate synthase arginine-specific small chain (cpa-1) (Emericella nidulans (strain FGSC A4 / ATCC 38163 / CBS 112.46 / NRRL 194 / M139) (Aspergillus nidulans)).